The sequence spans 197 residues: Pyridoxal 5'-phosphate synthase subunit PdxT (197 aa).

Position 52–54 (52–54 (GES)) interacts with L-glutamine. Cysteine 84 functions as the Nucleophile in the catalytic mechanism. L-glutamine-binding positions include arginine 116 and 143–144 (IR). Catalysis depends on charge relay system residues histidine 179 and glutamate 181.

The protein belongs to the glutaminase PdxT/SNO family. In the presence of PdxS, forms a dodecamer of heterodimers. Only shows activity in the heterodimer.

It carries out the reaction aldehydo-D-ribose 5-phosphate + D-glyceraldehyde 3-phosphate + L-glutamine = pyridoxal 5'-phosphate + L-glutamate + phosphate + 3 H2O + H(+). The catalysed reaction is L-glutamine + H2O = L-glutamate + NH4(+). The protein operates within cofactor biosynthesis; pyridoxal 5'-phosphate biosynthesis. In terms of biological role, catalyzes the hydrolysis of glutamine to glutamate and ammonia as part of the biosynthesis of pyridoxal 5'-phosphate. The resulting ammonia molecule is channeled to the active site of PdxS. The chain is Pyridoxal 5'-phosphate synthase subunit PdxT from Ignicoccus hospitalis (strain KIN4/I / DSM 18386 / JCM 14125).